A 309-amino-acid polypeptide reads, in one-letter code: Protein MAK16 homolog (309 aa).

The interval 194–309 (EADQFSEEEA…IEEETENQAN (116 aa)) is disordered. 2 stretches are compositionally biased toward acidic residues: residues 195-227 (ADQF…DIED) and 235-270 (VEGD…DDEE). Over residues 275–293 (ITKKRGPTFKPTKKTPQKR) the composition is skewed to basic residues. Residues 299 to 309 (EIEEETENQAN) show a composition bias toward acidic residues.

The protein belongs to the MAK16 family.

Its subcellular location is the nucleus. The protein localises to the nucleolus. This chain is Protein MAK16 homolog (mak16l), found in Dictyostelium discoideum (Social amoeba).